The chain runs to 285 residues: Phosphatidate cytidylyltransferase (285 aa).

8 consecutive transmembrane segments (helical) span residues 10–30 (FVLIPVVIAALFLLPPVGFAI), 56–76 (VWLAVLCGLLLALMLFLLPEY), 93–113 (LGWWIVALLLVLFYPGSAAIW), 121–141 (LIFGVLTIVPFFWGMLALRAW), 151–171 (AIWLLYVMILVWGADSGAYMF), 190–210 (WQGFIGGLATAAVISWGYGMW), 213–233 (LDVAPVTLLICSIVAALASVL), and 264–284 (IDSLTAAVPVFACLLLLVFRT).

The protein belongs to the CDS family.

The protein resides in the cell inner membrane. It catalyses the reaction a 1,2-diacyl-sn-glycero-3-phosphate + CTP + H(+) = a CDP-1,2-diacyl-sn-glycerol + diphosphate. Its pathway is phospholipid metabolism; CDP-diacylglycerol biosynthesis; CDP-diacylglycerol from sn-glycerol 3-phosphate: step 3/3. The polypeptide is Phosphatidate cytidylyltransferase (cdsA) (Escherichia coli O157:H7).